The following is a 291-amino-acid chain: Ribosomal RNA small subunit methyltransferase I (291 aa).

It belongs to the methyltransferase superfamily. RsmI family.

It localises to the cytoplasm. The enzyme catalyses cytidine(1402) in 16S rRNA + S-adenosyl-L-methionine = 2'-O-methylcytidine(1402) in 16S rRNA + S-adenosyl-L-homocysteine + H(+). In terms of biological role, catalyzes the 2'-O-methylation of the ribose of cytidine 1402 (C1402) in 16S rRNA. In Neisseria meningitidis serogroup B (strain ATCC BAA-335 / MC58), this protein is Ribosomal RNA small subunit methyltransferase I.